We begin with the raw amino-acid sequence, 168 residues long: Pleiotrophin (168 aa).

A signal peptide spans 1–32 (MSSQQYQQQRRKFAAAFLALIFILAAVDTAEA). Cystine bridges form between Cys-47-Cys-76, Cys-55-Cys-85, Cys-62-Cys-89, Cys-99-Cys-131, and Cys-109-Cys-141. Chondroitin sulfate binding regions lie at residues 92-99 (KKQFGAEC) and 123-131 (KRALHNADC). The interval 139–168 (KPCGKLTKPKPQAESKKKKKEGKKQEKMLD) is disordered. The interval 147-168 (PKPQAESKKKKKEGKKQEKMLD) is chondroitin sulfate A binding.

It belongs to the pleiotrophin family. As to quaternary structure, interacts with ALK and NEK6. Interacts with PTPRZ1 (via chondroitin sulfate groups); promotes formation of homooligomers; oligomerization impairs tyrosine phosphatase activity. Forms a complex with PTPRZ1 and CTNNB1; this complex inactivates PTPRZ1 protein tyrosine phosphatase activity through PTN interaction and stimulates tyrosine phosphorylation of CTNNB1. Interacts with ITGB3 and ITGA5. Forms a complex with PTPRZ1 and integrin alpha-V/beta-3 (ITGAV:ITGB3) that stimulates endothelial cell migration through ITGB3 'Tyr-773' phosphorylation. Interacts with SDC3 (via heparan sulfate chains); this interaction mediates the neurite outgrowth-promoting signal from PTN to the cytoskeleton of growing neurites; this interaction mediates osteoblast recruitment. Interacts with GPC2 (via heparan sulfate); this interaction promotes neurite outgrowth through binding of PTN with chondroitin sulfate of proteoglycans, thereby releasing PTPRS of chondroitin sulfate proteoglycans (CSPGs) and leading to binding with heparan sulfate of GPC2. In terms of processing, phosphorylated by NEK6. Osteoblast and brain. Expressed in the follicular epithelium and granulosa cells of the ovary. Strongly expressed in the uterus of newborn mice, and the degree of expression decreased in one-week-old mice, although the expression continues even in the uteri of adult mice. Expression gradually increases from proestrus to estrus, then decreases sharply, and thereafter gradually increased again. strongly expressed in the cochlea of WT mice 1 week after birth, and then the expression decreased and was undetectable by week 8 after birth. Expressed around the cell soma of osteocytes and apparently captured in the unmineralized interstitial matrix surrounding the cells. Furthermore distributed throughout the intraosseous canalicular porosity, being localized in the unmineralized matrix around the cell processes. Strongly expressed in the innermost layer of the periosteum.

The protein resides in the secreted. Its function is as follows. Secreted growth factor that mediates its signal through cell-surface proteoglycan and non-proteoglycan receptors. Binds cell-surface proteoglycan receptor via their chondroitin sulfate (CS) groups. Thereby regulates many processes like cell proliferation, cell survival, cell growth, cell differentiation and cell migration in several tissues namely neuron and bone. Also plays a role in synaptic plasticity and learning-related behavior by inhibiting long-term synaptic potentiation. Binds PTPRZ1, leading to neutralization of the negative charges of the CS chains of PTPRZ1, inducing PTPRZ1 clustering, thereby causing the dimerization and inactivation of its phosphatase activity leading to increased tyrosine phosphorylation of each of the PTPRZ1 substrates like ALK or AFAP1L2 in order to activate the PI3K-AKT pathway. Through PTPRZ1 binding controls oligodendrocyte precursor cell differentiation by enhancing the phosphorylation of AFAP1L2 in order to activate the PI3K-AKT pathway. Forms a complex with PTPRZ1 and integrin alpha-V/beta-3 (ITGAV:ITGB3) that stimulates endothelial cell migration through SRC dephosphorylation and activation that consequently leads to ITGB3 'Tyr-773' phosphorylation. In adult hippocampus promotes dendritic arborization, spine development, and functional integration and connectivity of newborn granule neurons through ALK by activating AKT signaling pathway. Binds GPC2 and chondroitin sulfate proteoglycans (CSPGs) at the neuron surface, leading to abrogation of binding between PTPRS and CSPGs and neurite outgrowth promotion. Binds SDC3 and mediates bone formation by recruiting and attaching osteoblasts/osteoblast precursors to the sites for new bone deposition. Binds ALK and promotes cell survival and cell proliferation through MAPK pathway activation. Inhibits proliferation and enhances differentiation of neural stem cells by inhibiting FGF2-induced fibroblast growth factor receptor signaling pathway. Mediates regulatory mechanisms in normal hemostasis and in hematopoietic regeneration and in maintaining the balance of myeloid and lymphoid regeneration. In addition may play a role in the female reproductive system, auditory response and the progesterone-induced decidualization pathway. This chain is Pleiotrophin, found in Mus musculus (Mouse).